The chain runs to 504 residues: Maturase K (504 aa).

The protein belongs to the intron maturase 2 family. MatK subfamily.

Its subcellular location is the plastid. It is found in the chloroplast. Its function is as follows. Usually encoded in the trnK tRNA gene intron. Probably assists in splicing its own and other chloroplast group II introns. The polypeptide is Maturase K (Bombax buonopozense (Red-flowered silk cotton tree)).